The following is an 844-amino-acid chain: MAIEKLSPGMQQYVDIKKQYPDAFLLFRMGDFYELFYEDAVNAAQILEISLTSRNKNADNPIPMAGVPYHSAQQYIDVLIEQGYKVAIAEQMEDPKQAVGVVKREVVQVITPGTVVDSSKPDSQNNFLVSIDREGNQFGLAYMDLVTGDFYVTGLLDFTLVCGEIRNLKAREVVLGYDLSEEEEQILSRQMNLVLSYEKESFEDLHLLDLRLATVEQTASSKLLQYVHRTQMRELNHLKPVIRYEIKDFLQMDYATKASLDLVENARSGKKQGSLFWLLDETKTAMGMRLLRSWIHRPLIDKERIVQRQEVVQVFLDHFFERSDLTDSLKGVYDIERLASRVSFGKTNPKDLLQLATTLSSVPRIRAILEGMEQPTLAYLIAQLDAIPELESLISAAIAPEAPHVITDGGIIRTGFDETLDKYRCVLREGTSWIAEIEAKERENSGISTLKIDYNKKDGYYFHVTNSQLGNVPAHFFRKATLKNSERFGTEELARIEGDMLEAREKSANLEYEIFMRIREEVGKYIQRLQALAQGIATVDVLQSLAVVAETQHLIRPEFGDDSQIDIRKGRHAVVEKVMGAQTYIPNTIQMAEDTSIQLVTGPNMSGKSTYMRQLAMTAVMAQLGSYVPAESAHLPIFDAIFTRIGAADDLVSGQSTFMVEMMEANNAISHATKNSLILFDELGRGTATYDGMALAQSIIEYIHEHIGAKTLFATHYHELTSLESSLQHLVNVHVATLEQDGQVTFLHKIEPGPADKSYGIHVAKIAGLPADLLARADKILTQLENQGTESPPPMRQTSAVTEQISLFDRAEEHPILAELAKLDVYNMTPMQVMNVLVELKQKL.

602–609 contributes to the ATP binding site; the sequence is GPNMSGKS.

The protein belongs to the DNA mismatch repair MutS family.

Its function is as follows. This protein is involved in the repair of mismatches in DNA. It is possible that it carries out the mismatch recognition step. This protein has a weak ATPase activity. The polypeptide is DNA mismatch repair protein MutS (Streptococcus pneumoniae (strain ATCC 700669 / Spain 23F-1)).